Consider the following 404-residue polypeptide: Synaptic vesicle membrane protein VAT-1 homolog (404 aa).

Residues 1 to 55 (MSAEREATEAATVAAAAEARAETGAGEGAPSQPPTVEVASDPQPPPAPEASASAS) are disordered. Position 2 is an N-acetylserine (serine 2). Serine 2 carries the post-translational modification Phosphoserine. Residues 9-24 (EAATVAAAAEARAETG) are compositionally biased toward low complexity. 2 positions are modified to phosphoserine: serine 31 and serine 40.

It belongs to the zinc-containing alcohol dehydrogenase family. Quinone oxidoreductase subfamily. Interacts with MFN1 and MFN2. Ubiquitously expressed.

The protein resides in the cytoplasm. It localises to the mitochondrion outer membrane. Plays a part in calcium-regulated keratinocyte activation in epidermal repair mechanisms. Has no effect on cell proliferation. Possesses ATPase activity. May negatively regulate mitochondrial fusion. In Rattus norvegicus (Rat), this protein is Synaptic vesicle membrane protein VAT-1 homolog (Vat1).